Here is a 278-residue protein sequence, read N- to C-terminus: Large ribosomal subunit protein uL2 (278 aa).

2 disordered regions span residues Leu-33–Gly-53 and Leu-219–Arg-278. Residues Ile-269–Arg-278 show a composition bias toward basic residues.

The protein belongs to the universal ribosomal protein uL2 family. As to quaternary structure, part of the 50S ribosomal subunit. Forms a bridge to the 30S subunit in the 70S ribosome.

One of the primary rRNA binding proteins. Required for association of the 30S and 50S subunits to form the 70S ribosome, for tRNA binding and peptide bond formation. It has been suggested to have peptidyltransferase activity; this is somewhat controversial. Makes several contacts with the 16S rRNA in the 70S ribosome. In Sphingopyxis alaskensis (strain DSM 13593 / LMG 18877 / RB2256) (Sphingomonas alaskensis), this protein is Large ribosomal subunit protein uL2.